The following is a 126-amino-acid chain: Histone H2B type 1-B (126 aa).

Positions 1-12 (MPEPSKSAPAPK) are enriched in low complexity. The disordered stretch occupies residues 1–36 (MPEPSKSAPAPKKGSKKAISKAQKKDGKKRKRSRKE). Pro-2 is subject to N-acetylproline. Glu-3 carries the ADP-ribosyl glutamic acid modification. Lys-6 is modified (N6-(2-hydroxyisobutyryl)lysine; alternate). An N6-(beta-hydroxybutyryl)lysine; alternate modification is found at Lys-6. The residue at position 6 (Lys-6) is an N6-acetyllysine; alternate. Lys-6 carries the post-translational modification N6-butyryllysine; alternate. N6-crotonyllysine; alternate is present on Lys-6. Lys-6 carries the post-translational modification N6-lactoyllysine; alternate. Residue Lys-6 forms a Glycyl lysine isopeptide (Lys-Gly) (interchain with G-Cter in SUMO2); alternate linkage. Ser-7 carries the post-translational modification ADP-ribosylserine. Lys-12 carries the post-translational modification N6-(beta-hydroxybutyryl)lysine; alternate. An N6-acetyllysine; alternate mark is found at Lys-12 and Lys-13. 2 positions are modified to N6-crotonyllysine; alternate: Lys-12 and Lys-13. Residue Lys-12 is modified to N6-lactoyllysine; alternate. Lys-13 is modified (N6-(2-hydroxyisobutyryl)lysine; alternate). At Ser-15 the chain carries Phosphoserine; by STK4/MST1. Lys-16, Lys-17, Lys-21, and Lys-24 each carry N6-acetyllysine; alternate. N6-crotonyllysine; alternate is present on residues Lys-16, Lys-17, Lys-21, and Lys-24. N6-lactoyllysine; alternate is present on residues Lys-16, Lys-17, Lys-21, and Lys-24. At Lys-17 the chain carries N6-glutaryllysine; alternate. N6-(2-hydroxyisobutyryl)lysine; alternate is present on residues Lys-21 and Lys-24. The residue at position 21 (Lys-21) is an N6-(beta-hydroxybutyryl)lysine; alternate. An N6-butyryllysine; alternate modification is found at Lys-21. Lys-21 participates in a covalent cross-link: Glycyl lysine isopeptide (Lys-Gly) (interchain with G-Cter in SUMO2); alternate. Lys-25 carries the post-translational modification N6-(2-hydroxyisobutyryl)lysine. Residue Lys-35 is modified to N6-(2-hydroxyisobutyryl)lysine; alternate. Position 35 is an N6-(beta-hydroxybutyryl)lysine; alternate (Lys-35). N6-crotonyllysine; alternate is present on Lys-35. An N6-glutaryllysine; alternate modification is found at Lys-35. Residue Lys-35 is modified to N6-succinyllysine; alternate. Lys-35 participates in a covalent cross-link: Glycyl lysine isopeptide (Lys-Gly) (interchain with G-Cter in ubiquitin); alternate. Glu-36 is subject to PolyADP-ribosyl glutamic acid. At Ser-37 the chain carries Phosphoserine; by AMPK. Residues Lys-44, Lys-47, and Lys-58 each carry the N6-(2-hydroxyisobutyryl)lysine; alternate modification. N6-lactoyllysine; alternate is present on Lys-44. 2 positions are modified to N6-glutaryllysine; alternate: Lys-44 and Lys-47. The residue at position 47 (Lys-47) is an N6-methyllysine; alternate. N6,N6-dimethyllysine; alternate is present on Lys-58. Arg-80 carries the dimethylated arginine modification. Lys-86 carries the N6-(2-hydroxyisobutyryl)lysine; alternate modification. The residue at position 86 (Lys-86) is an N6-acetyllysine; alternate. Lys-86 is modified (N6-lactoyllysine; alternate). Lys-86 is subject to N6,N6,N6-trimethyllysine; alternate. Arg-87 and Arg-93 each carry omega-N-methylarginine. Position 109 is an N6-(2-hydroxyisobutyryl)lysine; alternate (Lys-109). Lys-109 is subject to N6-(beta-hydroxybutyryl)lysine; alternate. Lys-109 is subject to N6-lactoyllysine; alternate. N6-glutaryllysine; alternate is present on Lys-109. Lys-109 bears the N6-methyllysine; alternate mark. O-linked (GlcNAc) serine glycosylation is present at Ser-113. A Phosphothreonine modification is found at Thr-116. 2 positions are modified to N6-(2-hydroxyisobutyryl)lysine; alternate: Lys-117 and Lys-121. Position 117 is an N6-(beta-hydroxybutyryl)lysine; alternate (Lys-117). 2 positions are modified to N6-lactoyllysine; alternate: Lys-117 and Lys-121. An N6-glutaryllysine; alternate mark is found at Lys-117 and Lys-121. N6-succinyllysine; alternate occurs at positions 117 and 121. Lys-117 carries the post-translational modification N6-methylated lysine; alternate. Lys-121 participates in a covalent cross-link: Glycyl lysine isopeptide (Lys-Gly) (interchain with G-Cter in ubiquitin); alternate.

This sequence belongs to the histone H2B family. In terms of assembly, the nucleosome is a histone octamer containing two molecules each of H2A, H2B, H3 and H4 assembled in one H3-H4 heterotetramer and two H2A-H2B heterodimers. The octamer wraps approximately 147 bp of DNA. Monoubiquitination at Lys-35 (H2BK34Ub) by the MSL1/MSL2 dimer is required for histone H3 'Lys-4' (H3K4me) and 'Lys-79' (H3K79me) methylation and transcription activation at specific gene loci, such as HOXA9 and MEIS1 loci. Similarly, monoubiquitination at Lys-121 (H2BK120Ub) by the RNF20/40 complex gives a specific tag for epigenetic transcriptional activation and is also prerequisite for histone H3 'Lys-4' and 'Lys-79' methylation. It also functions cooperatively with the FACT dimer to stimulate elongation by RNA polymerase II. H2BK120Ub also acts as a regulator of mRNA splicing: deubiquitination by USP49 is required for efficient cotranscriptional splicing of a large set of exons. In terms of processing, phosphorylated on Ser-15 (H2BS14ph) by STK4/MST1 during apoptosis; which facilitates apoptotic chromatin condensation. Also phosphorylated on Ser-15 in response to DNA double strand breaks (DSBs), and in correlation with somatic hypermutation and immunoglobulin class-switch recombination. Phosphorylation at Ser-37 (H2BS36ph) by AMPK in response to stress promotes transcription. Post-translationally, glcNAcylation at Ser-113 promotes monoubiquitination of Lys-121. It fluctuates in response to extracellular glucose, and associates with transcribed genes. ADP-ribosylated by PARP1 or PARP2 on Ser-7 (H2BS6ADPr) in response to DNA damage. H2BS6ADPr promotes recruitment of CHD1L. Mono-ADP-ribosylated on Glu-3 (H2BE2ADPr) by PARP3 in response to single-strand breaks. Poly ADP-ribosylation on Glu-36 (H2BE35ADPr) by PARP1 regulates adipogenesis: it inhibits phosphorylation at Ser-37 (H2BS36ph), thereby blocking expression of pro-adipogenetic genes. In terms of processing, hydroxybutyrylation of histones is induced by starvation. Post-translationally, crotonylation (Kcr) is specifically present in male germ cells and marks testis-specific genes in post-meiotic cells, including X-linked genes that escape sex chromosome inactivation in haploid cells. Crotonylation marks active promoters and enhancers and confers resistance to transcriptional repressors. It is also associated with post-meiotically activated genes on autosomes. Lactylated in macrophages by EP300/P300 by using lactoyl-CoA directly derived from endogenous or exogenous lactate, leading to stimulates gene transcription.

The protein localises to the nucleus. It localises to the chromosome. Functionally, core component of nucleosome. Nucleosomes wrap and compact DNA into chromatin, limiting DNA accessibility to the cellular machineries which require DNA as a template. Histones thereby play a central role in transcription regulation, DNA repair, DNA replication and chromosomal stability. DNA accessibility is regulated via a complex set of post-translational modifications of histones, also called histone code, and nucleosome remodeling. The sequence is that of Histone H2B type 1-B from Mus musculus (Mouse).